The chain runs to 79 residues: Protein AC4 (79 aa).

Disordered stretches follow at residues 1 to 24 (MCSY…SPQP) and 36 to 79 (LNPA…MPRR). Residues 38 to 47 (PAPTSSPTST) show a composition bias toward low complexity. Over residues 48–61 (RTEIQLNGENSRST) the composition is skewed to polar residues.

This sequence belongs to the geminiviridae protein AC4/C4 family.

Functionally, pathogenicity determinant. May act as a suppressor of RNA-mediated gene silencing, also known as post-transcriptional gene silencing (PTGS), a mechanism of plant viral defense that limits the accumulation of viral RNAs. The chain is Protein AC4 from Abutilon (Upland cotton).